The primary structure comprises 198 residues: Nucleoid occlusion factor SlmA (198 aa).

In terms of domain architecture, HTH tetR-type spans 10-70; it reads NRREEILQSL…SLIEFIEDSL (61 aa). The H-T-H motif DNA-binding region spans 33–52; the sequence is TTAKLAASVGVSEAALYRHF. A coiled-coil region spans residues 117 to 144; it reads EQDRLQGRINQLFERIEAQLRQVLREKR.

It belongs to the nucleoid occlusion factor SlmA family. As to quaternary structure, homodimer. Interacts with FtsZ.

It is found in the cytoplasm. The protein localises to the nucleoid. Functionally, required for nucleoid occlusion (NO) phenomenon, which prevents Z-ring formation and cell division over the nucleoid. Acts as a DNA-associated cell division inhibitor that binds simultaneously chromosomal DNA and FtsZ, and disrupts the assembly of FtsZ polymers. SlmA-DNA-binding sequences (SBS) are dispersed on non-Ter regions of the chromosome, preventing FtsZ polymerization at these regions. This Salmonella agona (strain SL483) protein is Nucleoid occlusion factor SlmA.